The following is a 329-amino-acid chain: BTB/POZ domain-containing adapter for CUL3-mediated RhoA degradation protein 1 (329 aa).

Positions 1-15 (MSAEASGPAAAEAPS) are enriched in low complexity. The segment at 1 to 21 (MSAEASGPAAAEAPSLEVAKP) is disordered. In terms of domain architecture, BTB spans 41-109 (KYVKLNVGGS…LRDGSVPLPE (69 aa)). A disordered region spans residues 280-302 (LEATGGAAGGGGASRGEDEDNRE).

Belongs to the BACURD family. In terms of assembly, homotetramer; forms a two-fold symmetric tetramer in solution. Interacts with CUL3; interaction is direct and forms a 5:5 heterodecamer. Component of the BCR(KCTD13) E3 ubiquitin ligase complex, at least composed of CUL3, KCTD13/BACURD1 and RBX1. Interacts with RHOA; with a preference for RhoA-GDP. Interacts with POLD2 and PCNA. Interacts with SPRTN.

The protein resides in the nucleus. It participates in protein modification; protein ubiquitination. Its function is as follows. Substrate-specific adapter of a BCR (BTB-CUL3-RBX1) E3 ubiquitin-protein ligase complex required for synaptic transmission. The BCR(KCTD13) E3 ubiquitin ligase complex mediates the ubiquitination of RHOA, leading to its degradation by the proteasome, thereby regulating the actin cytoskeleton and promoting synaptic transmission. The chain is BTB/POZ domain-containing adapter for CUL3-mediated RhoA degradation protein 1 (KCTD13) from Bos taurus (Bovine).